The sequence spans 134 residues: uncharacterized protein (134 aa).

It localises to the cell membrane. May have a role in the regulation of NDH-1 biosynthesis. This is an uncharacterized protein from Paracoccus denitrificans.